The primary structure comprises 335 residues: Large ribosomal subunit protein uL10 (335 aa).

The disordered stretch occupies residues 304-335 (GAAAPVEEAPVEEKKEEKKEEAAPAAGLGMLF). Positions 314–325 (VEEKKEEKKEEA) are enriched in basic and acidic residues.

This sequence belongs to the universal ribosomal protein uL10 family. In terms of assembly, part of the 50S ribosomal subunit. Forms part of the ribosomal stalk which helps the ribosome interact with GTP-bound translation factors. Forms a heptameric L10(L12)2(L12)2(L12)2 complex, where L10 forms an elongated spine to which the L12 dimers bind in a sequential fashion.

Its function is as follows. Forms part of the ribosomal stalk, playing a central role in the interaction of the ribosome with GTP-bound translation factors. This Methanococcus maripaludis (strain C6 / ATCC BAA-1332) protein is Large ribosomal subunit protein uL10.